A 1401-amino-acid polypeptide reads, in one-letter code: DNA-directed RNA polymerase subunit beta'' (1401 aa).

The Zn(2+) site is built by Cys224, Cys295, Cys302, and Cys305.

It belongs to the RNA polymerase beta' chain family. RpoC2 subfamily. In terms of assembly, in plastids the minimal PEP RNA polymerase catalytic core is composed of four subunits: alpha, beta, beta', and beta''. When a (nuclear-encoded) sigma factor is associated with the core the holoenzyme is formed, which can initiate transcription. It depends on Zn(2+) as a cofactor.

The protein resides in the plastid. Its subcellular location is the chloroplast. The enzyme catalyses RNA(n) + a ribonucleoside 5'-triphosphate = RNA(n+1) + diphosphate. Its function is as follows. DNA-dependent RNA polymerase catalyzes the transcription of DNA into RNA using the four ribonucleoside triphosphates as substrates. In Ipomoea purpurea (Common morning glory), this protein is DNA-directed RNA polymerase subunit beta''.